Reading from the N-terminus, the 1294-residue chain is Unconventional myosin-VI (1294 aa).

The region spanning 2-53 is the Myosin N-terminal SH3-like domain; it reads EDGKPVWAPHPTDGFQMGNIVDIGPDSLTIEPLNQKGKTFLALINQVFPAEE. Positions 57-771 constitute a Myosin motor domain; the sequence is KDVEDNCSLM…KFAEFDQIMK (715 aa). 151–158 serves as a coordination point for ATP; it reads GESGAGKT. Ser267 carries the phosphoserine modification. The segment at 273–317 is responsible for slow ATPase activity; the sequence is YLNRGCTRYFANKETDKQILQNRKSPEYLKAGSMKDPLLDDHGDF. Position 405 is a phosphothreonine (Thr405). The residue at position 604 (Ser604) is a Phosphoserine. Residues 665–672 are actin-binding; it reads FIRCIKPN. Residues 782–810 form a required for binding calmodulin region; that stretch reads KRVNHWLTCSRWKKVQWCSLSVIKLKNKI. Residues 814-834 enclose the IQ domain; it reads AEACIKMQKTIRMWLCKRRHK. The segment at 835-916 is three-helix bundle; that stretch reads PRIDGLVKVG…EELLSALQKK (82 aa). Positions 917–984 are SAH; the sequence is KQQEEEAERL…EDDEKRIQAE (68 aa). Residues 934–955 are disordered; that stretch reads EKERKRREEDEKRRRKEEEERR. Ser1025 is modified (phosphoserine). Positions 1060 to 1285 are interaction with TAX1BP1 and CALCOCO2/NDP52; that stretch reads KEMSEFLSRG…ESRQARPTYA (226 aa). The segment at 1116-1118 is interaction with OPTN; it reads RRL. Ser1155 carries the phosphoserine modification. The tract at residues 1157 to 1285 is interaction with TOM1; sequence QQNPAAQIPA…ESRQARPTYA (129 aa).

The protein belongs to the TRAFAC class myosin-kinesin ATPase superfamily. Myosin family. In terms of assembly, homodimer; dimerization seems to implicate the unfolding of the three-helix bundle region creating an additional calmodulin binding site, and cargo binding. Able to function as a monomer under specific conditions in vitro. Forms a complex with CFTR and DAB2 in the apical membrane of epithelial cells. Component of the DISP/DOCK7-induced septin displacement complex, at least composed of DOCK7, LRCH3 and MYO6. Binding to calmodulin through a unique insert, not found in other myosins, located in the neck region between the motor domain and the IQ domain appears to contribute to the directionality reversal. This interaction occurs only if the C-terminal lobe of calmodulin is occupied by calcium. Interaction with F-actin/ACTN1 occurs only at the apical brush border domain of the proximal tubule cells. Interacts with DAB2. In vitro, the C-terminal globular tail binds a C-terminal region of DAB2. Interacts with CFTR. Interacts with CABP5. Interacts with TOM1. Interacts with OPTN. Interacts with TAX1BP1 and CALCOCO2/NDP52. Interacts with TOM1L2. Interacts with CLIC5; may work together in a complex which also includes RDX and MYO6 to stabilize linkages between the plasma membrane and subjacent actin cytoskeleton at the base of stereocilia. In terms of processing, phosphorylation in the motor domain, induced by EGF, results in translocation of MYO6 from the cell surface to membrane ruffles and affects F-actin dynamics. Phosphorylated in vitro by p21-activated kinase (PAK). In terms of tissue distribution, expressed in most tissues examined including heart, brain, placenta, pancreas, spleen, thymus, prostate, testis, ovary, small intestine and colon. Highest levels in brain, pancreas, testis and small intestine. Also expressed in fetal brain and cochlea. Isoform 1 and isoform 2, containing the small insert, and isoform 4, containing neither insert, are expressed in unpolarized epithelial cells.

The protein localises to the golgi apparatus. The protein resides in the trans-Golgi network membrane. Its subcellular location is the nucleus. It localises to the cytoplasm. It is found in the perinuclear region. The protein localises to the membrane. The protein resides in the clathrin-coated pit. Its subcellular location is the cytoplasmic vesicle. It localises to the clathrin-coated vesicle. It is found in the cell projection. The protein localises to the filopodium. The protein resides in the ruffle membrane. Its subcellular location is the microvillus. It localises to the cytosol. It is found in the autophagosome. The protein localises to the endosome. The protein resides in the clathrin-coated vesicle membrane. Its function is as follows. Myosins are actin-based motor molecules with ATPase activity. Unconventional myosins serve in intracellular movements. Myosin 6 is a reverse-direction motor protein that moves towards the minus-end of actin filaments. Has slow rate of actin-activated ADP release due to weak ATP binding. Functions in a variety of intracellular processes such as vesicular membrane trafficking and cell migration. Required for the structural integrity of the Golgi apparatus via the p53-dependent pro-survival pathway. Appears to be involved in a very early step of clathrin-mediated endocytosis in polarized epithelial cells. Together with TOM1, mediates delivery of endocytic cargo to autophagosomes thereby promoting autophagosome maturation and driving fusion with lysosomes. Links TOM1 with autophagy receptors, such as TAX1BP1; CALCOCO2/NDP52 and OPTN. May act as a regulator of F-actin dynamics. As part of the DISP complex, may regulate the association of septins with actin and thereby regulate the actin cytoskeleton. May play a role in transporting DAB2 from the plasma membrane to specific cellular targets. May play a role in the extension and network organization of neurites. Required for structural integrity of inner ear hair cells. Required for the correct localization of CLIC5 and RDX at the stereocilium base. Modulates RNA polymerase II-dependent transcription. The chain is Unconventional myosin-VI from Homo sapiens (Human).